The primary structure comprises 200 residues: 3-isopropylmalate dehydratase small subunit (200 aa).

It belongs to the LeuD family. LeuD type 1 subfamily. In terms of assembly, heterodimer of LeuC and LeuD.

It carries out the reaction (2R,3S)-3-isopropylmalate = (2S)-2-isopropylmalate. The protein operates within amino-acid biosynthesis; L-leucine biosynthesis; L-leucine from 3-methyl-2-oxobutanoate: step 2/4. In terms of biological role, catalyzes the isomerization between 2-isopropylmalate and 3-isopropylmalate, via the formation of 2-isopropylmaleate. This is 3-isopropylmalate dehydratase small subunit from Campylobacter jejuni subsp. doylei (strain ATCC BAA-1458 / RM4099 / 269.97).